The following is a 504-amino-acid chain: O-fucosyltransferase 39 (504 aa).

Residues 11–27 (WILSMFFFVVLFCNNVS) traverse the membrane as a helical; Signal-anchor for type II membrane protein segment. N115 carries an N-linked (GlcNAc...) asparagine glycan. 288–290 (HLR) serves as a coordination point for substrate. N-linked (GlcNAc...) asparagine glycosylation is found at N359 and N460.

The protein belongs to the glycosyltransferase GT106 family.

It is found in the membrane. It participates in glycan metabolism. The chain is O-fucosyltransferase 39 from Arabidopsis thaliana (Mouse-ear cress).